Here is a 164-residue protein sequence, read N- to C-terminus: Histone H3-like centromeric protein CENH3 (164 aa).

Positions 1–11 (MARTKHPAVRK) are enriched in basic residues. Residues 1 to 71 (MARTKHPAVR…QRKPHRFRPG (71 aa)) form a disordered region. Lys-5 carries the N6,N6,N6-trimethyllysine; alternate modification. The residue at position 5 (Lys-5) is an N6,N6-dimethyllysine; alternate. An N6-methyllysine; alternate mark is found at Lys-5, Lys-19, and Lys-30. The segment covering 12–26 (SKAEPKKKLQFERSP) has biased composition (basic and acidic residues). N6-acetyllysine; alternate is present on Lys-19. N6,N6,N6-trimethyllysine; alternate is present on Lys-30. Lys-30 is modified (N6,N6-dimethyllysine; alternate). Residues 40 to 55 (TSATTRSAAGTSASGT) show a composition bias toward low complexity. A compositionally biased stretch (basic residues) spans 60–69 (TKQRKPHRFR).

It belongs to the histone H3 family.

Its subcellular location is the chromosome. The protein resides in the centromere. It localises to the kinetochore. Histone H3-like variant which exclusively replaces conventional H3 in the nucleosome core of centromeric chromatin at the inner plate of the kinetochore. Required for recruitment and assembly of kinetochore proteins, mitotic progression and chromosome segregation. The chain is Histone H3-like centromeric protein CENH3 from Oryza sativa subsp. japonica (Rice).